Reading from the N-terminus, the 528-residue chain is Dihydromonacolin L monooxygenase LovA (528 aa).

Topologically, residues methionine 1–histidine 23 are cytoplasmic. The chain crosses the membrane as a helical; Signal-anchor for type II membrane protein span at residues glycine 24–leucine 44. The Lumenal segment spans residues cysteine 45–leucine 528. A glycan (N-linked (GlcNAc...) asparagine) is linked at asparagine 399. Cysteine 465 serves as a coordination point for heme.

The protein belongs to the cytochrome P450 family. Requires heme as cofactor.

It localises to the membrane. The protein localises to the endoplasmic reticulum membrane. It catalyses the reaction dihydromonacolin L carboxylate + reduced [NADPH--hemoprotein reductase] + O2 = monacolin L carboxylate + oxidized [NADPH--hemoprotein reductase] + 2 H2O + H(+). The catalysed reaction is monacolin L carboxylate + reduced [NADPH--hemoprotein reductase] + O2 = monacolin J carboxylate + oxidized [NADPH--hemoprotein reductase] + H2O + H(+). The protein operates within polyketide biosynthesis; lovastatin biosynthesis. In terms of biological role, dihydromonacolin L monooxygenase; part of the gene cluster that mediates the biosynthesis of lovastatin (also known as mevinolin, mevacor or monacolin K), a hypolipidemic inhibitor of (3S)-hydroxymethylglutaryl-coenzyme A (HMG-CoA) reductase (HMGR). The first step in the biosynthesis of lovastatin is the production of dihydromonacolin L acid by the lovastatin nonaketide synthase lovB and the trans-acting enoyl reductase lovC via condensation of one acetyl-CoA unit and 8 malonyl-CoA units. Dihydromonacolin L acid is released from lovB by the thioesterase lovG. Next, dihydromonacolin L acid is oxidized by the dihydromonacolin L monooxygenase lovA twice to form monacolin J acid. The 2-methylbutyrate moiety of lovastatin is synthesized by the lovastatin diketide synthase lovF via condensation of one acetyl-CoA unit and one malonyl-CoA unit. Finally, the covalent attachment of this moiety to monacolin J acid is catalyzed by the transesterase lovD to yield lovastatin. LovD has broad substrate specificity and can also convert monacolin J to simvastatin using alpha-dimethylbutanoyl-S-methyl-3-mercaptopropionate (DMB-S-MMP) as the thioester acyl donor, and can also catalyze the reverse reaction and function as hydrolase in vitro. LovD has much higher activity with LovF-bound 2-methylbutanoate than with free diketide substrates. This is Dihydromonacolin L monooxygenase LovA from Aspergillus terreus (strain NIH 2624 / FGSC A1156).